The chain runs to 1163 residues: MAQDSQGQQQSLAKFAFNIYGTLGTPQSSNSPSANSSISSHKSSKRLSKNQLSNSYSRRLTYNAERDVQAIGQLNCGIQISHHISGNEPSHHAVIGGKNYLRLLCLNRDQQQVLQEIDLLDVKSIYRSRNPNKISSVNTIKTRENTIACGMSNGTISMYKVSPYGKGTLHAMLSDHRRTVNSIDFIDSTDHIISGSQDGSIKLWDLRASPTKPVFNLQANLHNDPIRACQYSPHSVVRNKTCILSVHDSGALCKFDLRSGSGSNMYSPDRKWNLHAGPVLSLHIHPEKEYVATGGRDHKICVFNYSEGRSLRTTPENIINTYGSILKVRWSSYLVNQGGRAGDGGGMGSMHTSTSFGDSTLALTNYDLACLYLNDDPTVTIYNLNRKYIPKQIINPYSQKAISNFMWAQNEIQGRRIWTLNKANQFMAYDLDSNFDTDIKRPLDDLPPIGMSWNDNDDFIWVNQAKDEFEANFESMCDDEQFLTDTAAAATATSTAFTASTSTNTAIAAERASSFDLEDHDHKMAGSSLGTSPIERPSLTRSYTHNPMSQFMTKSPSPILRSGTGVLDMTSPPSAGSALSTSTYTPRPKLARNPSQTTQGSAGSFGSTPASSSFAIKYKSGASGPGVSGVPGGPGVPGVPGGPIGGSLRLNSMVKSPFAFPVELPFNDEEAFKFLATEYLVTTPEGFTLADTCLMNASVAHEVGAYQSSQVWRVLAISLSDEKTMNAAAARMKTRTTLDNKNHVDEPDSANADHFNAATNMSATTDPNITAVSHTKHDQEEDVDSFALKSIQSDLDNVVGSYNSNSTLSIKYGRNINPLSSVSSHGIAYHGNDVHSRTNSMHHSRANSFNNTHSVRAGSSGADDHLSVHSQSNPLAIDSTTSKRGDYELENTNLMNSIFLRSSPNSIGFGSSRSYSSLASSPIDARRALPERQVPPEPLELNHDTSLILEKKQSNHSPKLPKRSGLSIALKNDDHHDCENDYEDGTEAWSFKSLLKGALEYAASQGEITFVSTIAILFYELARDIITFDQCLGWLGEYVEILQRKCLFVEATKIINFAPLDVAEKLKTLYAADTIRLYCSHCLKLLTNEKSKRQTHGEFGYWYCDECLQRQLNCVFCNEPCKGLVVAISLKCGHRGHFGCLKEWFIDEQNVECPGGCDVPIVV.

The tract at residues 24 to 52 is disordered; that stretch reads GTPQSSNSPSANSSISSHKSSKRLSKNQL. Residues 28 to 41 show a composition bias toward low complexity; that stretch reads SSNSPSANSSISSH. 5 WD repeats span residues 129–169, 175–214, 221–265, 274–313, and 346–392; these read RNPN…KGTL, DHRR…TKPV, LHND…GSNM, LHAG…SLRT, and GMGS…IPKQ. Disordered regions lie at residues 525-606 and 833-881; these read AGSS…GSFG and DVHS…DSTT. 4 stretches are compositionally biased toward polar residues: residues 539–556, 571–585, 593–606, and 868–880; these read LTRS…TKSP, SPPS…STYT, NPSQ…GSFG, and VHSQ…IDST. Residues 1114-1157 form an RING-type; degenerate zinc finger; the sequence is CVFCNEPCKGLVVAISLKCGHRGHFGCLKEWFIDEQNVECPGGC.

Belongs to the WD repeat RTC1 family.

Its subcellular location is the vacuole. Its function is as follows. May be involved in a process influencing telomere capping. The chain is Restriction of telomere capping protein 1 (RTC1) from Lodderomyces elongisporus (strain ATCC 11503 / CBS 2605 / JCM 1781 / NBRC 1676 / NRRL YB-4239) (Yeast).